A 151-amino-acid polypeptide reads, in one-letter code: NADH dehydrogenase [ubiquinone] 1 beta subcomplex subunit 11, mitochondrial (151 aa).

Residues 1 to 29 constitute a mitochondrion transit peptide; sequence MAARLLSLYGRCLSAAGAMRGLPAARVRW. A disordered region spans residues 40 to 62; it reads GVEKKRQREPTMQWQEDPEPEDE. Residues 87-107 form a helical membrane-spanning segment; that stretch reads AVFFFGFSIVLVFGTTFVAYV.

The protein belongs to the complex I NDUFB11 subunit family. Complex I is composed of 45 different subunits. Interacts with BCAP31.

Its subcellular location is the mitochondrion inner membrane. Functionally, accessory subunit of the mitochondrial membrane respiratory chain NADH dehydrogenase (Complex I), that is believed not to be involved in catalysis. Complex I functions in the transfer of electrons from NADH to the respiratory chain. The immediate electron acceptor for the enzyme is believed to be ubiquinone. This chain is NADH dehydrogenase [ubiquinone] 1 beta subcomplex subunit 11, mitochondrial (Ndufb11), found in Mus musculus (Mouse).